We begin with the raw amino-acid sequence, 466 residues long: Uronate isomerase (466 aa).

The protein belongs to the metallo-dependent hydrolases superfamily. Uronate isomerase family.

The enzyme catalyses D-glucuronate = D-fructuronate. The catalysed reaction is aldehydo-D-galacturonate = keto-D-tagaturonate. It functions in the pathway carbohydrate metabolism; pentose and glucuronate interconversion. This is Uronate isomerase from Brucella suis (strain ATCC 23445 / NCTC 10510).